Reading from the N-terminus, the 600-residue chain is MNCYKTHTCEELRKNDVEKEVTLSGWLYRKRDHGNLIFVDLRDFYGITQLVFNNDKDFFDEISNLKLESVITVTGIVEARTEDTVNSSISTGEIEVIVNNLRVESEVEFHFDEEIAKEERSILVSITGEQEYPENMRFKYRFLDLRREKVRNNIILRSQIIAELRKLMIERGFLEIQTPILTASSPEGARDYLVPSRLNPGKFYALPQAPQIFKQLLMVSGFDKYFQIAPCFRDEDARADRSPGEFYQLDLEMSFVTQEDIFQIIESTLYRVFAKFSRKSVDKDFPRITYKEAMLKYGSDKPDLRNPLLISDVTEIFRDSGFNIFKSNIERGMVVRAIPAPKTAEEPRSFFDKKIEHAQKEFGAKGLGYITFDKDGTAKGPIAKFLDENRLNHIREATNIEPGDSVFFASDKENEAANIAGKVRTLLGSELSLIDDNIFRFCWIIDFPYFVYDDKSKKIDFFHNPFSMPHGGLKDLEDKNPLDILAYQYDLVCNGIELSSGAIRNNKLDIMYKAFAIAGYSRGEVDTRFGALVRAFRFGVPPHGGIAPGVDRIVMLLADEPNIREVICFPMNQQGEDVLMGAPSKVEDKHLRELSLKVIE.

Glu-187 provides a ligand contact to L-aspartate. The tract at residues 211-214 is aspartate; sequence QIFK. L-aspartate is bound by residues Arg-233 and His-463. Residue 233-235 participates in ATP binding; that stretch reads RDE. ATP is bound at residue Glu-497. Arg-504 serves as a coordination point for L-aspartate. Residue 549 to 552 coordinates ATP; that stretch reads GVDR.

Belongs to the class-II aminoacyl-tRNA synthetase family. Type 1 subfamily. Homodimer.

Its subcellular location is the cytoplasm. It carries out the reaction tRNA(Asx) + L-aspartate + ATP = L-aspartyl-tRNA(Asx) + AMP + diphosphate. In terms of biological role, aspartyl-tRNA synthetase with relaxed tRNA specificity since it is able to aspartylate not only its cognate tRNA(Asp) but also tRNA(Asn). Reaction proceeds in two steps: L-aspartate is first activated by ATP to form Asp-AMP and then transferred to the acceptor end of tRNA(Asp/Asn). This chain is Aspartate--tRNA(Asp/Asn) ligase, found in Wolbachia pipientis wMel.